The sequence spans 232 residues: Large ribosomal subunit protein uL1 (232 aa).

This sequence belongs to the universal ribosomal protein uL1 family. In terms of assembly, part of the 50S ribosomal subunit.

Binds directly to 23S rRNA. The L1 stalk is quite mobile in the ribosome, and is involved in E site tRNA release. Functionally, protein L1 is also a translational repressor protein, it controls the translation of the L11 operon by binding to its mRNA. The chain is Large ribosomal subunit protein uL1 from Rhizobium rhizogenes (strain K84 / ATCC BAA-868) (Agrobacterium radiobacter).